The primary structure comprises 277 residues: Large ribosomal subunit protein uL2 (277 aa).

Disordered regions lie at residues Arg-35–Gly-57 and Gly-222–Arg-277. Composition is skewed to basic residues over residues Leu-37–Gly-57 and Val-268–Arg-277.

This sequence belongs to the universal ribosomal protein uL2 family. In terms of assembly, part of the 50S ribosomal subunit. Forms a bridge to the 30S subunit in the 70S ribosome.

In terms of biological role, one of the primary rRNA binding proteins. Required for association of the 30S and 50S subunits to form the 70S ribosome, for tRNA binding and peptide bond formation. It has been suggested to have peptidyltransferase activity; this is somewhat controversial. Makes several contacts with the 16S rRNA in the 70S ribosome. The chain is Large ribosomal subunit protein uL2 from Frankia casuarinae (strain DSM 45818 / CECT 9043 / HFP020203 / CcI3).